The chain runs to 216 residues: Orotate phosphoribosyltransferase (216 aa).

Lys30 lines the 5-phospho-alpha-D-ribose 1-diphosphate pocket. 38-39 (FF) serves as a coordination point for orotate. 5-phospho-alpha-D-ribose 1-diphosphate contacts are provided by residues 75 to 76 (YK), Arg102, Lys103, Lys106, His108, and 128 to 136 (DDVITAGTA). The orotate site is built by Thr132 and Arg160.

It belongs to the purine/pyrimidine phosphoribosyltransferase family. PyrE subfamily. Homodimer. The cofactor is Mg(2+).

It catalyses the reaction orotidine 5'-phosphate + diphosphate = orotate + 5-phospho-alpha-D-ribose 1-diphosphate. It functions in the pathway pyrimidine metabolism; UMP biosynthesis via de novo pathway; UMP from orotate: step 1/2. Functionally, catalyzes the transfer of a ribosyl phosphate group from 5-phosphoribose 1-diphosphate to orotate, leading to the formation of orotidine monophosphate (OMP). The polypeptide is Orotate phosphoribosyltransferase (Acinetobacter baumannii (strain AB307-0294)).